The following is a 609-amino-acid chain: Major facilitator superfamily domain-containing protein 6-like protein A (609 aa).

The next 2 helical transmembrane spans lie at 41–61 (LGLG…VHLL) and 78–98 (FFIM…AYYP). Residues 201–241 (SGKAQKVMSSKSAASNSKQRSSLNNHTSPYATHPNVSHHPS) are disordered. A compositionally biased stretch (polar residues) spans 207–230 (VMSSKSAASNSKQRSSLNNHTSPY). Helical transmembrane passes span 265–285 (IFLI…PLEW), 307–327 (LWIW…FLVD), 340–360 (VFFH…LSTL), 388–408 (IVLT…TQNF), 420–440 (ELYM…LYFF), 452–472 (WMVA…SFLW), 475–495 (WSVL…WWAI), 513–535 (LALR…GFII), and 541–561 (AVLY…FLLV).

It belongs to the major facilitator superfamily. MFSD6 family.

It is found in the membrane. In Xenopus laevis (African clawed frog), this protein is Major facilitator superfamily domain-containing protein 6-like protein A (mfsd6l-a).